Consider the following 201-residue polypeptide: Putative amino-acid transporter Mb0498 (201 aa).

5 consecutive transmembrane segments (helical) span residues valine 25–glycine 45, methionine 57–alanine 77, leucine 104–leucine 124, tryptophan 133–serine 153, and isoleucine 169–serine 189.

This sequence belongs to the LysE/ArgO transporter (TC 2.A.75) family.

It localises to the cell membrane. The protein is Putative amino-acid transporter Mb0498 of Mycobacterium bovis (strain ATCC BAA-935 / AF2122/97).